An 81-amino-acid chain; its full sequence is MKTLLLTLVVVTIVCLDLGYTMTCCNQQSSQPKTITTCAESSCYKKTWKDHHGTRIERGCGCPKVKPGVGLECCKTDECNN.

The signal sequence occupies residues 1 to 21 (MKTLLLTLVVVTIVCLDLGYT). Cystine bridges form between Cys24-Cys43, Cys38-Cys60, Cys62-Cys73, and Cys74-Cys79.

The protein belongs to the three-finger toxin family. Short-chain subfamily. Type I alpha-neurotoxin sub-subfamily. In terms of tissue distribution, expressed by the venom gland.

It localises to the secreted. Functionally, binds to muscle nicotinic acetylcholine receptor (nAChR) and inhibit acetylcholine from binding to the receptor, thereby impairing neuromuscular transmission. The sequence is that of Short neurotoxin 2 from Cryptophis nigrescens (Eastern small-eyed snake).